Here is a 184-residue protein sequence, read N- to C-terminus: Photosystem I assembly protein Ycf4 (184 aa).

A run of 2 helical transmembrane segments spans residues 20–40 (GNFF…VVGI) and 64–84 (IVMS…WCTI).

This sequence belongs to the Ycf4 family.

The protein localises to the plastid. It is found in the chloroplast thylakoid membrane. Seems to be required for the assembly of the photosystem I complex. The protein is Photosystem I assembly protein Ycf4 of Citrus sinensis (Sweet orange).